Consider the following 118-residue polypeptide: DNA polymerase epsilon subunit 4 (118 aa).

2 stretches are compositionally biased toward low complexity: residues methionine 1 to threonine 11 and glycine 19 to glycine 35. A disordered region spans residues methionine 1–valine 37. Position 2 is an N-acetylalanine (alanine 2). Threonine 11 is modified (phosphothreonine). Residue serine 25 is modified to Phosphoserine.

As to quaternary structure, component of the DNA polymerase epsilon complex consisting of four subunits: the catalytic subunit POLE and the accessory subunits POLE2, POLE3 and POLE4. Interaction with POLE3 is a prerequisite for further binding with POLE and POLE2.

The protein resides in the nucleus. Its function is as follows. Accessory component of the DNA polymerase epsilon complex. Participates in DNA repair and in chromosomal DNA replication. The polypeptide is DNA polymerase epsilon subunit 4 (Pole4) (Mus musculus (Mouse)).